The sequence spans 650 residues: Fructose-1,6-bisphosphatase class 3 (650 aa).

This sequence belongs to the FBPase class 3 family. Mn(2+) is required as a cofactor.

The catalysed reaction is beta-D-fructose 1,6-bisphosphate + H2O = beta-D-fructose 6-phosphate + phosphate. It participates in carbohydrate biosynthesis; gluconeogenesis. This Staphylococcus saprophyticus subsp. saprophyticus (strain ATCC 15305 / DSM 20229 / NCIMB 8711 / NCTC 7292 / S-41) protein is Fructose-1,6-bisphosphatase class 3.